Reading from the N-terminus, the 360-residue chain is Cytochrome b-c1 complex subunit 2, mitochondrial (360 aa).

The N-terminal 15 residues, 1–15 (MLSSRLQFAQQTARK), are a transit peptide targeting the mitochondrion.

It belongs to the peptidase M16 family. UQCRC2/QCR2 subfamily. As to quaternary structure, component of the ubiquinol-cytochrome c oxidoreductase (cytochrome b-c1 complex, complex III, CIII), a multisubunit enzyme composed of 3 respiratory subunits cytochrome b, cytochrome c1 and Rieske protein, 2 core protein subunits, and additional low-molecular weight protein subunits. The complex exists as an obligatory dimer and forms supercomplexes (SCs) in the inner mitochondrial membrane with cytochrome c oxidase (complex IV, CIV).

The protein localises to the mitochondrion inner membrane. Functionally, component of the ubiquinol-cytochrome c oxidoreductase, a multisubunit transmembrane complex that is part of the mitochondrial electron transport chain which drives oxidative phosphorylation. The respiratory chain contains 3 multisubunit complexes succinate dehydrogenase (complex II, CII), ubiquinol-cytochrome c oxidoreductase (cytochrome b-c1 complex, complex III, CIII) and cytochrome c oxidase (complex IV, CIV), that cooperate to transfer electrons derived from NADH and succinate to molecular oxygen, creating an electrochemical gradient over the inner membrane that drives transmembrane transport and the ATP synthase. The cytochrome b-c1 complex catalyzes electron transfer from ubiquinol to cytochrome c, linking this redox reaction to translocation of protons across the mitochondrial inner membrane, with protons being carried across the membrane as hydrogens on the quinol. In the process called Q cycle, 2 protons are consumed from the matrix, 4 protons are released into the intermembrane space and 2 electrons are passed to cytochrome c. This Kluyveromyces lactis (strain ATCC 8585 / CBS 2359 / DSM 70799 / NBRC 1267 / NRRL Y-1140 / WM37) (Yeast) protein is Cytochrome b-c1 complex subunit 2, mitochondrial (QCR2).